The sequence spans 376 residues: Sulfate/thiosulfate import ATP-binding protein CysA 1 (376 aa).

Positions 3 to 237 (IRLTNISKKF…PNSRFVFDFL (235 aa)) constitute an ABC transporter domain. Residue 35-42 (GPSGSGKT) coordinates ATP.

This sequence belongs to the ABC transporter superfamily. Sulfate/tungstate importer (TC 3.A.1.6) family. As to quaternary structure, the complex is composed of two ATP-binding proteins (CysA), two transmembrane proteins (CysT and CysW) and a solute-binding protein (CysP).

Its subcellular location is the cell inner membrane. The catalysed reaction is sulfate(out) + ATP + H2O = sulfate(in) + ADP + phosphate + H(+). It carries out the reaction thiosulfate(out) + ATP + H2O = thiosulfate(in) + ADP + phosphate + H(+). Part of the ABC transporter complex CysAWTP involved in sulfate/thiosulfate import. Responsible for energy coupling to the transport system. This is Sulfate/thiosulfate import ATP-binding protein CysA 1 from Shewanella oneidensis (strain ATCC 700550 / JCM 31522 / CIP 106686 / LMG 19005 / NCIMB 14063 / MR-1).